A 232-amino-acid chain; its full sequence is Cytidylate kinase (232 aa).

Residue 19–27 (GPAGVGKTT) participates in ATP binding.

This sequence belongs to the cytidylate kinase family. Type 1 subfamily.

Its subcellular location is the cytoplasm. The enzyme catalyses CMP + ATP = CDP + ADP. It catalyses the reaction dCMP + ATP = dCDP + ADP. This chain is Cytidylate kinase, found in Nitratidesulfovibrio vulgaris (strain ATCC 29579 / DSM 644 / CCUG 34227 / NCIMB 8303 / VKM B-1760 / Hildenborough) (Desulfovibrio vulgaris).